A 392-amino-acid polypeptide reads, in one-letter code: Imidazolonepropionase (392 aa).

His69 and His71 together coordinate Fe(3+). 2 residues coordinate Zn(2+): His69 and His71. Arg78, Tyr136, and His163 together coordinate 4-imidazolone-5-propanoate. Tyr136 is an N-formimidoyl-L-glutamate binding site. His226 serves as a coordination point for Fe(3+). His226 lines the Zn(2+) pocket. Gln229 lines the 4-imidazolone-5-propanoate pocket. Asp302 is a Fe(3+) binding site. Asp302 serves as a coordination point for Zn(2+). Positions 304 and 306 each coordinate N-formimidoyl-L-glutamate. Ser307 serves as a coordination point for 4-imidazolone-5-propanoate.

The protein belongs to the metallo-dependent hydrolases superfamily. HutI family. Requires Zn(2+) as cofactor. The cofactor is Fe(3+).

It localises to the cytoplasm. It carries out the reaction 4-imidazolone-5-propanoate + H2O = N-formimidoyl-L-glutamate. It participates in amino-acid degradation; L-histidine degradation into L-glutamate; N-formimidoyl-L-glutamate from L-histidine: step 3/3. Its function is as follows. Catalyzes the hydrolytic cleavage of the carbon-nitrogen bond in imidazolone-5-propanoate to yield N-formimidoyl-L-glutamate. It is the third step in the universal histidine degradation pathway. The polypeptide is Imidazolonepropionase (Salinispora tropica (strain ATCC BAA-916 / DSM 44818 / JCM 13857 / NBRC 105044 / CNB-440)).